A 219-amino-acid polypeptide reads, in one-letter code: Redox-sensing transcriptional repressor Rex (219 aa).

A DNA-binding region (H-T-H motif) is located at residues 18–57; sequence LYYRFIQSLYNSGKLRVSSAELSEAVKVDSATIRRDFSYF. NAD(+) is bound at residue 92–97; it reads GVGHLG.

It belongs to the transcriptional regulatory Rex family. In terms of assembly, homodimer.

It localises to the cytoplasm. Functionally, modulates transcription in response to changes in cellular NADH/NAD(+) redox state. The chain is Redox-sensing transcriptional repressor Rex from Exiguobacterium sibiricum (strain DSM 17290 / CCUG 55495 / CIP 109462 / JCM 13490 / 255-15).